The chain runs to 304 residues: tRNA dimethylallyltransferase (304 aa).

ATP is bound at residue 13 to 20 (GPTAAGKT). 15-20 (TAAGKT) provides a ligand contact to substrate. The tract at residues 38–41 (DSRQ) is interaction with substrate tRNA.

This sequence belongs to the IPP transferase family. In terms of assembly, monomer. It depends on Mg(2+) as a cofactor.

The catalysed reaction is adenosine(37) in tRNA + dimethylallyl diphosphate = N(6)-dimethylallyladenosine(37) in tRNA + diphosphate. Catalyzes the transfer of a dimethylallyl group onto the adenine at position 37 in tRNAs that read codons beginning with uridine, leading to the formation of N6-(dimethylallyl)adenosine (i(6)A). The sequence is that of tRNA dimethylallyltransferase from Cytophaga hutchinsonii (strain ATCC 33406 / DSM 1761 / CIP 103989 / NBRC 15051 / NCIMB 9469 / D465).